Consider the following 337-residue polypeptide: Glyceraldehyde-3-phosphate dehydrogenase (337 aa).

Residues arginine 12–isoleucine 13, aspartate 34, and arginine 79 contribute to the NAD(+) site. D-glyceraldehyde 3-phosphate contacts are provided by residues serine 150 to threonine 152, threonine 181, threonine 210 to glycine 211, and arginine 233. Catalysis depends on cysteine 151, which acts as the Nucleophile. Residue asparagine 315 participates in NAD(+) binding.

Belongs to the glyceraldehyde-3-phosphate dehydrogenase family. Homotetramer.

It is found in the cytoplasm. The catalysed reaction is D-glyceraldehyde 3-phosphate + phosphate + NAD(+) = (2R)-3-phospho-glyceroyl phosphate + NADH + H(+). It participates in carbohydrate degradation; glycolysis; pyruvate from D-glyceraldehyde 3-phosphate: step 1/5. This chain is Glyceraldehyde-3-phosphate dehydrogenase (GPD), found in Podospora anserina (Pleurage anserina).